The sequence spans 397 residues: Endoglucanase (397 aa).

The Proton donor role is filled by Glu-194. Residue Glu-317 is the Nucleophile of the active site.

This sequence belongs to the glycosyl hydrolase 5 (cellulase A) family.

It carries out the reaction Endohydrolysis of (1-&gt;4)-beta-D-glucosidic linkages in cellulose, lichenin and cereal beta-D-glucans.. In Paenibacillus polymyxa (Bacillus polymyxa), this protein is Endoglucanase.